The sequence spans 420 residues: Gamma-glutamyl phosphate reductase (420 aa).

Belongs to the gamma-glutamyl phosphate reductase family.

Its subcellular location is the cytoplasm. It carries out the reaction L-glutamate 5-semialdehyde + phosphate + NADP(+) = L-glutamyl 5-phosphate + NADPH + H(+). It participates in amino-acid biosynthesis; L-proline biosynthesis; L-glutamate 5-semialdehyde from L-glutamate: step 2/2. Its function is as follows. Catalyzes the NADPH-dependent reduction of L-glutamate 5-phosphate into L-glutamate 5-semialdehyde and phosphate. The product spontaneously undergoes cyclization to form 1-pyrroline-5-carboxylate. The protein is Gamma-glutamyl phosphate reductase of Neisseria meningitidis serogroup B (strain ATCC BAA-335 / MC58).